Consider the following 554-residue polypeptide: DM7 family protein GG17593 (554 aa).

The protein belongs to the DM7 family.

This Drosophila erecta (Fruit fly) protein is DM7 family protein GG17593.